The sequence spans 226 residues: tRNA (guanine-N(1)-)-methyltransferase (226 aa).

S-adenosyl-L-methionine-binding positions include Gly-110 and 129–134; that span reads IGDYIL.

This sequence belongs to the RNA methyltransferase TrmD family. As to quaternary structure, homodimer.

The protein resides in the cytoplasm. The enzyme catalyses guanosine(37) in tRNA + S-adenosyl-L-methionine = N(1)-methylguanosine(37) in tRNA + S-adenosyl-L-homocysteine + H(+). Functionally, specifically methylates guanosine-37 in various tRNAs. The protein is tRNA (guanine-N(1)-)-methyltransferase of Malacoplasma penetrans (strain HF-2) (Mycoplasma penetrans).